A 545-amino-acid chain; its full sequence is CTP synthase (545 aa).

The interval 1 to 265 (MSKYIFVTGG…DDLVVQNLGL (265 aa)) is amidoligase domain. Ser13 is a CTP binding site. Residue Ser13 coordinates UTP. ATP-binding positions include 14–19 (SLGKGA) and Asp71. Asp71 and Glu139 together coordinate Mg(2+). CTP is bound by residues 146 to 148 (DIE), 186 to 191 (KTKPTQ), and Lys222. UTP-binding positions include 186–191 (KTKPTQ) and Lys222. The region spanning 290–541 (VIALVGKYVG…MRAAIAQRER (252 aa)) is the Glutamine amidotransferase type-1 domain. Gly351 provides a ligand contact to L-glutamine. Catalysis depends on Cys378, which acts as the Nucleophile; for glutamine hydrolysis. Residues 379–382 (LGMQ), Glu402, and Arg469 contribute to the L-glutamine site. Active-site residues include His514 and Glu516.

Belongs to the CTP synthase family. As to quaternary structure, homotetramer.

The catalysed reaction is UTP + L-glutamine + ATP + H2O = CTP + L-glutamate + ADP + phosphate + 2 H(+). The enzyme catalyses L-glutamine + H2O = L-glutamate + NH4(+). It catalyses the reaction UTP + NH4(+) + ATP = CTP + ADP + phosphate + 2 H(+). It functions in the pathway pyrimidine metabolism; CTP biosynthesis via de novo pathway; CTP from UDP: step 2/2. Allosterically activated by GTP, when glutamine is the substrate; GTP has no effect on the reaction when ammonia is the substrate. The allosteric effector GTP functions by stabilizing the protein conformation that binds the tetrahedral intermediate(s) formed during glutamine hydrolysis. Inhibited by the product CTP, via allosteric rather than competitive inhibition. In terms of biological role, catalyzes the ATP-dependent amination of UTP to CTP with either L-glutamine or ammonia as the source of nitrogen. Regulates intracellular CTP levels through interactions with the four ribonucleotide triphosphates. This chain is CTP synthase, found in Acidithiobacillus ferrooxidans (strain ATCC 23270 / DSM 14882 / CIP 104768 / NCIMB 8455) (Ferrobacillus ferrooxidans (strain ATCC 23270)).